The sequence spans 101 residues: Antiviral protein CAP (101 aa).

Functionally, has antiviral activity against tobacco mosaic virus and antitumor activity. The chain is Antiviral protein CAP from Coprinus comatus (Shaggy mane).